A 118-amino-acid polypeptide reads, in one-letter code: Large ribosomal subunit protein uL18 (118 aa).

The protein belongs to the universal ribosomal protein uL18 family. Part of the 50S ribosomal subunit; part of the 5S rRNA/L5/L18/L25 subcomplex. Contacts the 5S and 23S rRNAs.

In terms of biological role, this is one of the proteins that bind and probably mediate the attachment of the 5S RNA into the large ribosomal subunit, where it forms part of the central protuberance. In Rickettsia conorii (strain ATCC VR-613 / Malish 7), this protein is Large ribosomal subunit protein uL18.